Here is a 136-residue protein sequence, read N- to C-terminus: Ribonuclease P protein component (136 aa).

The protein belongs to the RnpA family. Consists of a catalytic RNA component (M1 or rnpB) and a protein subunit.

The enzyme catalyses Endonucleolytic cleavage of RNA, removing 5'-extranucleotides from tRNA precursor.. Functionally, RNaseP catalyzes the removal of the 5'-leader sequence from pre-tRNA to produce the mature 5'-terminus. It can also cleave other RNA substrates such as 4.5S RNA. The protein component plays an auxiliary but essential role in vivo by binding to the 5'-leader sequence and broadening the substrate specificity of the ribozyme. The sequence is that of Ribonuclease P protein component from Arthrobacter sp. (strain FB24).